A 252-amino-acid chain; its full sequence is Large ribosomal subunit protein uL4 (252 aa).

It belongs to the universal ribosomal protein uL4 family. As to quaternary structure, part of the 50S ribosomal subunit.

Its function is as follows. One of the primary rRNA binding proteins, this protein initially binds near the 5'-end of the 23S rRNA. It is important during the early stages of 50S assembly. It makes multiple contacts with different domains of the 23S rRNA in the assembled 50S subunit and ribosome. Functionally, forms part of the polypeptide exit tunnel. This is Large ribosomal subunit protein uL4 from Archaeoglobus fulgidus (strain ATCC 49558 / DSM 4304 / JCM 9628 / NBRC 100126 / VC-16).